Here is a 243-residue protein sequence, read N- to C-terminus: 1-(5-phosphoribosyl)-5-[(5-phosphoribosylamino)methylideneamino] imidazole-4-carboxamide isomerase (243 aa).

The active-site Proton acceptor is the aspartate 8. Aspartate 129 serves as the catalytic Proton donor.

It belongs to the HisA/HisF family.

The protein localises to the cytoplasm. The enzyme catalyses 1-(5-phospho-beta-D-ribosyl)-5-[(5-phospho-beta-D-ribosylamino)methylideneamino]imidazole-4-carboxamide = 5-[(5-phospho-1-deoxy-D-ribulos-1-ylimino)methylamino]-1-(5-phospho-beta-D-ribosyl)imidazole-4-carboxamide. It functions in the pathway amino-acid biosynthesis; L-histidine biosynthesis; L-histidine from 5-phospho-alpha-D-ribose 1-diphosphate: step 4/9. In Syntrophotalea carbinolica (strain DSM 2380 / NBRC 103641 / GraBd1) (Pelobacter carbinolicus), this protein is 1-(5-phosphoribosyl)-5-[(5-phosphoribosylamino)methylideneamino] imidazole-4-carboxamide isomerase.